We begin with the raw amino-acid sequence, 505 residues long: Trans-cinnamate 4-monooxygenase (505 aa).

Residues 3-23 traverse the membrane as a helical segment; the sequence is LLLLEKTLLGSFVAVLVAILV. (E)-cinnamate-binding positions include 213-218 and A306; that span reads RSRLAQ. A heme-binding site is contributed by C447.

This sequence belongs to the cytochrome P450 family. Requires heme as cofactor.

It is found in the membrane. It catalyses the reaction (E)-cinnamate + reduced [NADPH--hemoprotein reductase] + O2 = (E)-4-coumarate + oxidized [NADPH--hemoprotein reductase] + H2O + H(+). Its pathway is phenylpropanoid metabolism; trans-4-coumarate biosynthesis; trans-4-coumarate from trans-cinnamate: step 1/1. In terms of biological role, catalyzes the first oxidative step of the phenylpropanoid pathway in higher plants by transforming trans-cinnamate into p-coumarate. The compounds formed by this pathway are essential components for lignification, pollination, and defense against ultraviolet light, predators and pathogens. In Populus kitakamiensis (Aspen), this protein is Trans-cinnamate 4-monooxygenase (CYP73A16).